A 283-amino-acid chain; its full sequence is Undecaprenyl-diphosphatase (283 aa).

The next 8 membrane-spanning stretches (helical) occupy residues 4-24 (LLIL…FLPI), 45-65 (ADLF…YEYW), 91-111 (QLGL…FTLA), 118-138 (LFNP…IFYV), 153-173 (VSLK…IPGT), 194-214 (AEFS…LDLL), 228-248 (ILGV…RWLV), and 258-278 (IFAW…WIFG).

Belongs to the UppP family.

Its subcellular location is the cell inner membrane. The enzyme catalyses di-trans,octa-cis-undecaprenyl diphosphate + H2O = di-trans,octa-cis-undecaprenyl phosphate + phosphate + H(+). Its function is as follows. Catalyzes the dephosphorylation of undecaprenyl diphosphate (UPP). Confers resistance to bacitracin. This chain is Undecaprenyl-diphosphatase, found in Psychrobacter sp. (strain PRwf-1).